The sequence spans 434 residues: UDP-N-acetylglucosamine 1-carboxyvinyltransferase (434 aa).

Residue 22–23 (KN) participates in phosphoenolpyruvate binding. Arginine 99 is a binding site for UDP-N-acetyl-alpha-D-glucosamine. Cysteine 123 serves as the catalytic Proton donor. Cysteine 123 carries the 2-(S-cysteinyl)pyruvic acid O-phosphothioketal modification. Residues 128 to 132 (RPVDQ), aspartate 317, and isoleucine 339 each bind UDP-N-acetyl-alpha-D-glucosamine.

It belongs to the EPSP synthase family. MurA subfamily.

The protein localises to the cytoplasm. It catalyses the reaction phosphoenolpyruvate + UDP-N-acetyl-alpha-D-glucosamine = UDP-N-acetyl-3-O-(1-carboxyvinyl)-alpha-D-glucosamine + phosphate. Its pathway is cell wall biogenesis; peptidoglycan biosynthesis. In terms of biological role, cell wall formation. Adds enolpyruvyl to UDP-N-acetylglucosamine. This is UDP-N-acetylglucosamine 1-carboxyvinyltransferase from Paracidovorax citrulli (strain AAC00-1) (Acidovorax citrulli).